The primary structure comprises 492 residues: Catalase (492 aa).

Catalysis depends on residues His65 and Asn138. Residue Tyr348 coordinates heme.

It belongs to the catalase family. Homotetramer. Requires heme as cofactor.

The protein localises to the cytoplasm. It localises to the cytosol. Its subcellular location is the peroxisome matrix. The enzyme catalyses 2 H2O2 = O2 + 2 H2O. In terms of biological role, catalyzes the degradation of hydrogen peroxide (H(2)O(2)) generated by peroxisomal oxidases to water and oxygen, thereby protecting cells from the toxic effects of hydrogen peroxide. This Ipomoea batatas (Sweet potato) protein is Catalase.